The chain runs to 93 residues: Acylphosphatase (93 aa).

In terms of domain architecture, Acylphosphatase-like spans 7–93 (RLTAWVHGRV…ADAIAGFTER (87 aa)). Residues arginine 22 and asparagine 40 contribute to the active site.

Belongs to the acylphosphatase family.

The enzyme catalyses an acyl phosphate + H2O = a carboxylate + phosphate + H(+). In Mycolicibacterium vanbaalenii (strain DSM 7251 / JCM 13017 / BCRC 16820 / KCTC 9966 / NRRL B-24157 / PYR-1) (Mycobacterium vanbaalenii), this protein is Acylphosphatase (acyP).